The sequence spans 247 residues: Phosphoribosylaminoimidazole-succinocarboxamide synthase (247 aa).

The protein belongs to the SAICAR synthetase family.

It catalyses the reaction 5-amino-1-(5-phospho-D-ribosyl)imidazole-4-carboxylate + L-aspartate + ATP = (2S)-2-[5-amino-1-(5-phospho-beta-D-ribosyl)imidazole-4-carboxamido]succinate + ADP + phosphate + 2 H(+). It functions in the pathway purine metabolism; IMP biosynthesis via de novo pathway; 5-amino-1-(5-phospho-D-ribosyl)imidazole-4-carboxamide from 5-amino-1-(5-phospho-D-ribosyl)imidazole-4-carboxylate: step 1/2. The chain is Phosphoribosylaminoimidazole-succinocarboxamide synthase from Methanopyrus kandleri (strain AV19 / DSM 6324 / JCM 9639 / NBRC 100938).